We begin with the raw amino-acid sequence, 123 residues long: Large ribosomal subunit protein bL19 (123 aa).

It belongs to the bacterial ribosomal protein bL19 family.

Its function is as follows. This protein is located at the 30S-50S ribosomal subunit interface and may play a role in the structure and function of the aminoacyl-tRNA binding site. The protein is Large ribosomal subunit protein bL19 (rplS) of Treponema pallidum (strain Nichols).